Reading from the N-terminus, the 186-residue chain is MKFSQAVIALAAATVVSAQLPDVPQCSLPCFLDALTTDGCSELTDFKCHCSKPELPAKITPCVKSKCPVAEQVSVSNAVVKQCSEAGAPVSIPPVEESSSKPSEPSTSEAPTASPTESTPAPTTPAPTGTGSPSGTGAPGGPSGTGTFTNTGVPTQSTPIYTGAASGLSANIGGMGAAILAIAAYL.

An N-terminal signal peptide occupies residues 1–18 (MKFSQAVIALAAATVVSA). The region spanning 19-108 (QLPDVPQCSL…SSKPSEPSTS (90 aa)) is the CFEM domain. 4 cysteine pairs are disulfide-bonded: Cys26–Cys67, Cys30–Cys62, Cys40–Cys48, and Cys50–Cys83. Asp45 contributes to the heme binding site. The tract at residues 89 to 159 (PVSIPPVEES…NTGVPTQSTP (71 aa)) is disordered. The span at 96–131 (EESSSKPSEPSTSEAPTASPTESTPAPTTPAPTGTG) shows a compositional bias: low complexity. Gly residues predominate over residues 132-144 (SPSGTGAPGGPSG). Over residues 148-159 (FTNTGVPTQSTP) the composition is skewed to polar residues. Residue Gly163 is the site of GPI-anchor amidated glycine attachment. Positions 164–186 (AASGLSANIGGMGAAILAIAAYL) are cleaved as a propeptide — removed in mature form.

Belongs to the RBT5 family. The GPI-anchor is attached to the protein in the endoplasmic reticulum and serves to target the protein to the cell surface. There, the glucosamine-inositol phospholipid moiety is cleaved off and the GPI-modified mannoprotein is covalently attached via its lipidless GPI glycan remnant to the 1,6-beta-glucan of the outer cell wall layer.

It is found in the secreted. The protein resides in the cell wall. The protein localises to the cell membrane. Its function is as follows. GPI-anchored cell wall protein involved in stabilizing the cell wall. The protein is GPI-anchored hemophore ARB_02741 of Arthroderma benhamiae (strain ATCC MYA-4681 / CBS 112371) (Trichophyton mentagrophytes).